Reading from the N-terminus, the 75-residue chain is U9-theraphotoxin-Cg1a (75 aa).

An N-terminal signal peptide occupies residues 1–21 (MKTLVLFIIFGLAALFLLSSA). A propeptide spanning residues 22–29 (NELEETER) is cleaved from the precursor. Disulfide bonds link cysteine 31-cysteine 46, cysteine 38-cysteine 51, and cysteine 45-cysteine 58.

Belongs to the neurotoxin 10 (Hwtx-1) family. 43 (Jztx-49) subfamily. Expressed by the venom gland.

Its subcellular location is the secreted. In terms of biological role, probable ion channel inhibitor. In Chilobrachys guangxiensis (Chinese earth tiger tarantula), this protein is U9-theraphotoxin-Cg1a.